A 368-amino-acid polypeptide reads, in one-letter code: Phosphate acyltransferase (368 aa).

Positions 334-368 (AAPLGESGRDADGAGQASPSAGQPAEPSAALSSKT) are disordered.

Belongs to the PlsX family. Homodimer. Probably interacts with PlsY.

The protein resides in the cytoplasm. The enzyme catalyses a fatty acyl-[ACP] + phosphate = an acyl phosphate + holo-[ACP]. The protein operates within lipid metabolism; phospholipid metabolism. In terms of biological role, catalyzes the reversible formation of acyl-phosphate (acyl-PO(4)) from acyl-[acyl-carrier-protein] (acyl-ACP). This enzyme utilizes acyl-ACP as fatty acyl donor, but not acyl-CoA. This chain is Phosphate acyltransferase, found in Burkholderia thailandensis (strain ATCC 700388 / DSM 13276 / CCUG 48851 / CIP 106301 / E264).